We begin with the raw amino-acid sequence, 111 residues long: Cell division topological specificity factor (111 aa).

The protein belongs to the MinE family.

Functionally, prevents the cell division inhibition by proteins MinC and MinD at internal division sites while permitting inhibition at polar sites. This ensures cell division at the proper site by restricting the formation of a division septum at the midpoint of the long axis of the cell. In Prochlorococcus marinus (strain MIT 9312), this protein is Cell division topological specificity factor.